A 508-amino-acid chain; its full sequence is Histidine ammonia-lyase (508 aa).

The segment at residues A141 to G143 is a cross-link (5-imidazolinone (Ala-Gly)). At S142 the chain carries 2,3-didehydroalanine (Ser).

It belongs to the PAL/histidase family. In terms of processing, contains an active site 4-methylidene-imidazol-5-one (MIO), which is formed autocatalytically by cyclization and dehydration of residues Ala-Ser-Gly.

The protein localises to the cytoplasm. The catalysed reaction is L-histidine = trans-urocanate + NH4(+). The protein operates within amino-acid degradation; L-histidine degradation into L-glutamate; N-formimidoyl-L-glutamate from L-histidine: step 1/3. The polypeptide is Histidine ammonia-lyase (hutH) (Bacillus subtilis (strain 168)).